Reading from the N-terminus, the 89-residue chain is MTEAKKSLKRTLVGKVVSDKRAKTVTVLIERRVKHELYGKIVGKSSKYHAHDETGEYKLGDIIEITESRPISKTKNWVATRLVQKAAVV.

Belongs to the universal ribosomal protein uS17 family. Part of the 30S ribosomal subunit.

One of the primary rRNA binding proteins, it binds specifically to the 5'-end of 16S ribosomal RNA. The chain is Small ribosomal subunit protein uS17 from Albidiferax ferrireducens (strain ATCC BAA-621 / DSM 15236 / T118) (Rhodoferax ferrireducens).